Here is a 202-residue protein sequence, read N- to C-terminus: Securin (202 aa).

The interval 1-92 (MATLIYVDKE…QKQPSFSAKK (92 aa)) is disordered. Alanine 2 is modified (N-acetylalanine). The D-box motif lies at 61–64 (RKAL). Short sequence motifs (TEK-box) lie at residues 71 to 73 (TEK) and 94 to 96 (TEK). Positions 163 to 173 (XPSPVKMPSPP) match the SH3-binding motif. At serine 165 the chain carries Phosphoserine; by CDK1.

This sequence belongs to the securin family. As to quaternary structure, interacts with RPS10 and DNAJA1. Interacts with the caspase-like ESPL1, and prevents its protease activity probably by covering its active site. Interacts with TP53 and blocks its activity probably by blocking its binding to DNA. Interacts with the Ku 70 kDa subunit of ds-DNA kinase. Interacts with PTTG1IP. Phosphorylated at Ser-165 by CDK1 during mitosis. In terms of processing, phosphorylated in vitro by ds-DNA kinase. Post-translationally, ubiquitinated through 'Lys-11' linkage of ubiquitin moieties by the anaphase promoting complex (APC) at the onset of anaphase, conducting to its degradation. 'Lys-11'-linked ubiquitination is mediated by the E2 ligase UBE2C/UBCH10.

The protein localises to the cytoplasm. It is found in the nucleus. Regulatory protein, which plays a central role in chromosome stability, in the p53/TP53 pathway, and DNA repair. Probably acts by blocking the action of key proteins. During the mitosis, it blocks Separase/ESPL1 function, preventing the proteolysis of the cohesin complex and the subsequent segregation of the chromosomes. At the onset of anaphase, it is ubiquitinated, conducting to its destruction and to the liberation of ESPL1. Its function is however not limited to a blocking activity, since it is required to activate ESPL1. Negatively regulates the transcriptional activity and related apoptosis activity of TP53. The negative regulation of TP53 may explain the strong transforming capability of the protein when it is overexpressed. May also play a role in DNA repair via its interaction with Ku, possibly by connecting DNA damage-response pathways with sister chromatid separation. The protein is Securin (PTTG1) of Pan troglodytes (Chimpanzee).